The chain runs to 485 residues: Proline betaine:corrinoid methyltransferase (485 aa).

It belongs to the trimethylamine methyltransferase family. In terms of assembly, the proline betaine:THF methyl transfer system is composed of two methyltransferases, MtpB and MtqA, and the corrinoid protein MtqC.

The enzyme catalyses Co(I)-[quaternary-amine-specific corrinoid protein] + L-proline betaine + H(+) = methyl-Co(III)-[quaternary-amine-specific corrinoid protein] + N-methyl-L-proline. Involved in the degradation of the quaternary amine L-proline betaine. Component of a corrinoid-dependent methyltransferase system that transfers a methyl group from L-proline betaine to tetrahydrofolate (THF), forming methyl-THF, a key intermediate in the Wood-Ljungdahl acetogenesis pathway. MtpB catalyzes the methylation of the corrinoid protein MtqC, using L-proline betaine as the methyl donor. Shows weak activity with some other quaternary amines, including carnitine, phosphocholine, glycine betaine or betonicine, but cannot methylate free cob(I)alamin. The protein is Proline betaine:corrinoid methyltransferase of Eubacterium limosum.